The sequence spans 284 residues: Bifunctional protein FolD (284 aa).

Residues 165–167 and Ser190 each bind NADP(+); that span reads GRS.

Belongs to the tetrahydrofolate dehydrogenase/cyclohydrolase family. As to quaternary structure, homodimer.

It catalyses the reaction (6R)-5,10-methylene-5,6,7,8-tetrahydrofolate + NADP(+) = (6R)-5,10-methenyltetrahydrofolate + NADPH. The catalysed reaction is (6R)-5,10-methenyltetrahydrofolate + H2O = (6R)-10-formyltetrahydrofolate + H(+). It participates in one-carbon metabolism; tetrahydrofolate interconversion. Functionally, catalyzes the oxidation of 5,10-methylenetetrahydrofolate to 5,10-methenyltetrahydrofolate and then the hydrolysis of 5,10-methenyltetrahydrofolate to 10-formyltetrahydrofolate. This Streptococcus agalactiae serotype Ia (strain ATCC 27591 / A909 / CDC SS700) protein is Bifunctional protein FolD.